The following is a 129-amino-acid chain: Large ribosomal subunit protein bL21 (129 aa).

Positions 100–129 are disordered; it reads DGAKPSKKAAEKKAPKAAPKKAAAKAESAE.

It belongs to the bacterial ribosomal protein bL21 family. As to quaternary structure, part of the 50S ribosomal subunit. Contacts protein L20.

In terms of biological role, this protein binds to 23S rRNA in the presence of protein L20. The sequence is that of Large ribosomal subunit protein bL21 from Brucella anthropi (strain ATCC 49188 / DSM 6882 / CCUG 24695 / JCM 21032 / LMG 3331 / NBRC 15819 / NCTC 12168 / Alc 37) (Ochrobactrum anthropi).